The sequence spans 175 residues: Pre-mRNA-splicing factor SNT309 (175 aa).

Belongs to the NTC complex (or PRP19-associated complex), composed of at least CEF1, CLF1, ISY1, NTC20, SNT309, SYF1, SYF2, and PRP19. The NTC complex associates with the spliceosome after the release of the U1 and U4 snRNAs and forms the CWC spliceosome subcomplex (or CEF1-associated complex) reminiscent of a late-stage spliceosome composed also of the U2, U5 and U6 snRNAs and at least BUD13, BUD31, BRR2, CDC40, CUS1, CWC2, CWC15, CWC21, CWC22, CWC23, CWC24, CWC25, CWC27, ECM2, HSH155, IST3, LEA1, MSL1, PRP8, PRP9, PRP11, PRP21, PRP22, PRP45, PRP46, SLU7, SMB1, SMD1, SMD2, SMD3, SMX2, SMX3, SNU114, SPP2, RSE1 and YJU2. Interacts with PRP19.

The protein resides in the nucleus. Functionally, involved in pre-mRNA splicing by stabilizing the NTC (or PRP19-associated complex). As a component of the NTC complex, associates to the spliceosome to mediate conformational rearrangement or to stabilize the structure of the spliceosome after U4 snRNA dissociation, which leads to spliceosome maturation. The chain is Pre-mRNA-splicing factor SNT309 (SNT309) from Saccharomyces cerevisiae (strain ATCC 204508 / S288c) (Baker's yeast).